Reading from the N-terminus, the 139-residue chain is Interleukin-5 (139 aa).

The signal sequence occupies residues 1–19 (MMKILVCLPLLTLYAGCVY). Asparagine 48, asparagine 77, and asparagine 91 each carry an N-linked (GlcNAc...) asparagine glycan.

Belongs to the IL-5 family. As to quaternary structure, homodimer; disulfide-linked. Interacts with IL5RA. Interacts with CSF2RB.

The protein localises to the secreted. In terms of biological role, homodimeric cytokine expressed predominantly by T-lymphocytes and NK cells that plays an important role in the survival, differentiation, and chemotaxis of eosinophils. Also acts on activated and resting B-cells to induce immunoglobulin production, growth, and differentiation. Mechanistically, exerts its biological effects through a receptor composed of IL5RA subunit and the cytokine receptor common subunit beta/CSF2RB. Binding to the receptor leads to activation of various kinases including LYN, SYK and JAK2 and thereby propagates signals through the RAS-MAPK and JAK-STAT5 pathways respectively. This chain is Interleukin-5 (IL5), found in Notamacropus eugenii (Tammar wallaby).